The primary structure comprises 403 residues: Aspartic endopeptidase PEP1 (403 aa).

The N-terminal stretch at 1–20 is a signal peptide; that stretch reads MVQISQIGAVLAVCSTLTVA. A propeptide spans 21-67 (activation peptide); it reads APTKGKARFNVPQVAVPMKAVHHPAVAYARALHKFGMKVPKAVSDAA. The 319-residue stretch at 82–400 folds into the Peptidase A1 domain; that stretch reads YVTQVTVGQG…DTEGPRIGFA (319 aa). Asp98 is a catalytic residue. Asn159 and Asn270 each carry an N-linked (GlcNAc...) asparagine glycan. Residue Asp293 is part of the active site. A disulfide bridge connects residues Cys329 and Cys361.

It belongs to the peptidase A1 family.

The protein localises to the secreted. The catalysed reaction is Hydrolysis of proteins with broad specificity. Generally favors hydrophobic residues in P1 and P1', but also accepts Lys in P1, which leads to activation of trypsinogen. Does not clot milk.. Functionally, secreted aspartic endopeptidase that allows assimilation of proteinaceous substrates. Can catalyze hydrolysis of the major structural proteins of basement membrane, elastin, collagen, and laminin. Thought to play a significant role in virulence. In terms of biological role, can catalyze hydrolysis of the major structural proteins of basement membrane, elastin, collagen, and laminin. Thought to play a significant role in virulence. This chain is Aspartic endopeptidase PEP1 (PEP1), found in Trichophyton verrucosum (strain HKI 0517).